A 389-amino-acid polypeptide reads, in one-letter code: Probable nitrate transporter NarT (389 aa).

12 consecutive transmembrane segments (helical) span residues 14-34, 45-65, 69-89, 97-117, 139-159, 161-181, 211-231, 246-266, 268-288, 294-314, 331-351, and 353-373; these read TLSLVVGFMAWSIIAPLMPFI, ISIILAIPVILGSVLRVPFGY, IVGAKWVFFTSFIVLLFPIFF, GMLMASGFFLGVGGAIFSVGV, GNIGTAVSSFLAPPIAGIIGW, TTVRSYLIIIALFALIMFIFG, WYFITFGAFVAFGIFLPNYLV, GVFIALATFLRPIGGILGDKF, AVKVLMIDFVIMIIGAVILGI, LFTVGCLTISICAGIGNGLIF, IVSMMGGLGGFFPPLVITYVA, and LTGSSHLAFIFLAVFGCIALF.

This sequence belongs to the major facilitator superfamily. Nitrate/nitrite porter (TC 2.A.1.8) family.

Its subcellular location is the cell membrane. In terms of biological role, probably required for nitrate uptake under anoxic conditions. Also possibly involved in excretion of nitrite produced by the dissimilatory reduction of nitrate. This chain is Probable nitrate transporter NarT (narT), found in Staphylococcus aureus (strain MRSA252).